Reading from the N-terminus, the 461-residue chain is MIDTIAALSTAQGPGAIGILRVSGSLVMPIALAVLEKNQKPLTETFLQNQKRSAIFCDFVENGKPLDQIVFFYFPAPNSYTGEDLAEFHLHGNPLLLKRALHVLFEKGARPAQKGEFTKRAYMNGKINLSGAEAISRLIEARSKYELELAQKNVFGEITKLSSKIRSDLISLKAECEAEIDFSTEDLTFESLEERKNRMVALKNLCSKLIKDSERAESYILQSTVVLYGEPNTGKSSLMNLLIGKDRSIISDVPGTTRDYIAEELSLDGIPIRLVDTAGIRDTTDNIEQMGIERSKREADSANVKLFLIDTSLPFEKQSFLLKHKDRLFGSLIVANKIDSKHPSWHTESIHDIQEEFQLTISEISCKTKQGIPELLELLKSKLTSKDDTEDLVLLEDRQRYHIQKIESCLSEAIQLMENNAPAEIYIQEINVALHEIGQVNGVVENEEILGRIFSKFCVGK.

The (6S)-5-formyl-5,6,7,8-tetrahydrofolate site is built by arginine 21, glutamate 87, and lysine 126. Residues 222–384 form the TrmE-type G domain; sequence QSTVVLYGEP…LLELLKSKLT (163 aa). Position 232 (asparagine 232) interacts with K(+). Residues 232-237, 251-257, and 276-279 each bind GTP; these read NTGKSS, SDVPGTT, and DTAG. A Mg(2+)-binding site is contributed by serine 236. Residues serine 251, valine 253, and threonine 256 each coordinate K(+). Threonine 257 is a Mg(2+) binding site. (6S)-5-formyl-5,6,7,8-tetrahydrofolate is bound at residue lysine 461.

It belongs to the TRAFAC class TrmE-Era-EngA-EngB-Septin-like GTPase superfamily. TrmE GTPase family. As to quaternary structure, homodimer. Heterotetramer of two MnmE and two MnmG subunits. K(+) serves as cofactor.

The protein resides in the cytoplasm. Exhibits a very high intrinsic GTPase hydrolysis rate. Involved in the addition of a carboxymethylaminomethyl (cmnm) group at the wobble position (U34) of certain tRNAs, forming tRNA-cmnm(5)s(2)U34. The sequence is that of tRNA modification GTPase MnmE from Leptospira biflexa serovar Patoc (strain Patoc 1 / Ames).